The chain runs to 323 residues: Large ribosomal subunit protein uL10 (323 aa).

Positions 298 to 323 are disordered; that stretch reads AAAAPAAAAEPEEEDDDDDFGMGALF. Residues 307 to 317 are compositionally biased toward acidic residues; that stretch reads EPEEEDDDDDF.

It belongs to the universal ribosomal protein uL10 family. As to quaternary structure, P0 forms a pentameric complex by interaction with dimers of P1 and P2. Post-translationally, phosphorylated.

Its function is as follows. Ribosomal protein P0 is the functional equivalent of E.coli protein L10. This is Large ribosomal subunit protein uL10 from Trypanosoma cruzi.